The following is a 152-amino-acid chain: MKSERQQKILEIIQNEDIETQEELVERLKALGYDVTQATVSRDIKELRLTKVLTETGKYKYAVLSGPEANITEKLIKVFSESIVKYDTADNLVIIKTITGAAQGAAAAIDSLSWPEVVGTIAGDDTIFIATKGSAAADKIVERIKAIISQGE.

It belongs to the ArgR family.

It is found in the cytoplasm. The protein operates within amino-acid biosynthesis; L-arginine biosynthesis [regulation]. Functionally, regulates arginine biosynthesis genes. The chain is Arginine repressor from Caldicellulosiruptor bescii (strain ATCC BAA-1888 / DSM 6725 / KCTC 15123 / Z-1320) (Anaerocellum thermophilum).